Consider the following 299-residue polypeptide: ATP phosphoribosyltransferase (299 aa).

The protein belongs to the ATP phosphoribosyltransferase family. Long subfamily. Requires Mg(2+) as cofactor.

Its subcellular location is the cytoplasm. It carries out the reaction 1-(5-phospho-beta-D-ribosyl)-ATP + diphosphate = 5-phospho-alpha-D-ribose 1-diphosphate + ATP. It functions in the pathway amino-acid biosynthesis; L-histidine biosynthesis; L-histidine from 5-phospho-alpha-D-ribose 1-diphosphate: step 1/9. With respect to regulation, feedback inhibited by histidine. Its function is as follows. Catalyzes the condensation of ATP and 5-phosphoribose 1-diphosphate to form N'-(5'-phosphoribosyl)-ATP (PR-ATP). Has a crucial role in the pathway because the rate of histidine biosynthesis seems to be controlled primarily by regulation of HisG enzymatic activity. This is ATP phosphoribosyltransferase from Mannheimia succiniciproducens (strain KCTC 0769BP / MBEL55E).